Reading from the N-terminus, the 235-residue chain is MHGFLGEFLGTMVLIVFGVGSGAAMNLKGNYARHQNWTFICLAWGLAVTFGVYVAGQFGSDGHLNPAVTVGFALFGYLPMANVWPYLLGQFLGAFIGAVIVIIQYYPHFQAAKTAADGNQVGIFATGPAISNPVFNFLSETIATFFFIFVLLNLGNFTQGLKPLMVGLLIVVVGQTLGGTTGFAINPARDWAPRLAYTILPVPNKGLANWGYAWVPMFGPLLGGILAAGLETIIS.

The next 6 membrane-spanning stretches (helical) occupy residues 4 to 24, 39 to 59, 62 to 82, 83 to 103, 134 to 154, and 165 to 185; these read FLGE…SGAA, FICL…GQFG, GHLN…PMAN, VWPY…IVII, VFNF…LLNL, and MVGL…GFAI. An NPA 1 motif is present at residues 65 to 67; it reads NPA. The NPA 2 motif lies at 186–188; sequence NPA. The chain crosses the membrane as a helical span at residues 210 to 230; it reads WGYAWVPMFGPLLGGILAAGL.

Belongs to the MIP/aquaporin (TC 1.A.8) family.

The protein resides in the cell membrane. Transporter that facilitates the transmembrane diffusion of water, dihydroxyacetone, glycerol and H(2)O(2). Is not permeable to urea and D/L-lactic acid. The sequence is that of Glycerol uptake facilitator protein 2 from Lactiplantibacillus plantarum (strain ATCC BAA-793 / NCIMB 8826 / WCFS1) (Lactobacillus plantarum).